The chain runs to 455 residues: MGLSVVILAAGKGSRMNSNKPKVLQTLAAKTLIEHVVSSVEKLNPDNIVVVTGHLKEQVEDALQGRNITFVYQQQQLGTGHAVLQALPYLKEQKVLILYGDVPLISTEVLENLVDTTNDDDLGVLTAFVENPQGLGRIVRDKFGAVTEIVEEKDANDIQRQIKEINTGIYCVHKNLLQKWLPEIKANNVQKEYYLTDIITFAKADHVSINVTHPINEFEILGVNDRTQLASLERVWQRNVAEKIMAKGVSIADPNRFDVRGNLDVGKDCWIDINVIIKGNVKLGNNVVIGANCILKNCIIEDNVRIKSNSMVDGSIIREGAIVGPFARVRPECDVKEGAVIGNFVEAKKTILGKGSKASHLTYLGDSEIGANCNIGAGVITCNYDGVNKHKTVIGDYAFIGSDSQLIAPVNIGQGATVGAGSTIAKDVPADNLAISRARQRHIDTWQRPVKKTDK.

The segment at 1-226 (MGLSVVILAA…EFEILGVNDR (226 aa)) is pyrophosphorylase. UDP-N-acetyl-alpha-D-glucosamine-binding positions include 8 to 11 (LAAG), lysine 22, glutamine 73, 78 to 79 (GT), 99 to 101 (YGD), glycine 136, glutamate 151, asparagine 166, and asparagine 224. Aspartate 101 contributes to the Mg(2+) binding site. Residue asparagine 224 coordinates Mg(2+). Residues 227–247 (TQLASLERVWQRNVAEKIMAK) form a linker region. The tract at residues 248–455 (GVSIADPNRF…WQRPVKKTDK (208 aa)) is N-acetyltransferase. UDP-N-acetyl-alpha-D-glucosamine contacts are provided by arginine 330 and lysine 348. Histidine 360 serves as the catalytic Proton acceptor. UDP-N-acetyl-alpha-D-glucosamine contacts are provided by tyrosine 363 and asparagine 374. Acetyl-CoA contacts are provided by residues alanine 377, 383 to 384 (NY), serine 402, alanine 420, and arginine 437.

It in the N-terminal section; belongs to the N-acetylglucosamine-1-phosphate uridyltransferase family. The protein in the C-terminal section; belongs to the transferase hexapeptide repeat family. Homotrimer. It depends on Mg(2+) as a cofactor.

The protein resides in the cytoplasm. The enzyme catalyses alpha-D-glucosamine 1-phosphate + acetyl-CoA = N-acetyl-alpha-D-glucosamine 1-phosphate + CoA + H(+). The catalysed reaction is N-acetyl-alpha-D-glucosamine 1-phosphate + UTP + H(+) = UDP-N-acetyl-alpha-D-glucosamine + diphosphate. Its pathway is nucleotide-sugar biosynthesis; UDP-N-acetyl-alpha-D-glucosamine biosynthesis; N-acetyl-alpha-D-glucosamine 1-phosphate from alpha-D-glucosamine 6-phosphate (route II): step 2/2. It participates in nucleotide-sugar biosynthesis; UDP-N-acetyl-alpha-D-glucosamine biosynthesis; UDP-N-acetyl-alpha-D-glucosamine from N-acetyl-alpha-D-glucosamine 1-phosphate: step 1/1. The protein operates within bacterial outer membrane biogenesis; LPS lipid A biosynthesis. Functionally, catalyzes the last two sequential reactions in the de novo biosynthetic pathway for UDP-N-acetylglucosamine (UDP-GlcNAc). The C-terminal domain catalyzes the transfer of acetyl group from acetyl coenzyme A to glucosamine-1-phosphate (GlcN-1-P) to produce N-acetylglucosamine-1-phosphate (GlcNAc-1-P), which is converted into UDP-GlcNAc by the transfer of uridine 5-monophosphate (from uridine 5-triphosphate), a reaction catalyzed by the N-terminal domain. The polypeptide is Bifunctional protein GlmU (Francisella tularensis subsp. novicida (strain U112)).